The following is a 353-amino-acid chain: Peptide chain release factor 1 (353 aa).

Glutamine 230 bears the N5-methylglutamine mark.

Belongs to the prokaryotic/mitochondrial release factor family. Post-translationally, methylated by PrmC. Methylation increases the termination efficiency of RF1.

Its subcellular location is the cytoplasm. In terms of biological role, peptide chain release factor 1 directs the termination of translation in response to the peptide chain termination codons UAG and UAA. This Gluconobacter oxydans (strain 621H) (Gluconobacter suboxydans) protein is Peptide chain release factor 1.